A 355-amino-acid chain; its full sequence is Probable L-aspartate decarboxylase (355 aa).

N6-(pyridoxal phosphate)lysine is present on K210.

Belongs to the group II decarboxylase family. MfnA subfamily. Requires pyridoxal 5'-phosphate as cofactor.

The catalysed reaction is L-aspartate + H(+) = beta-alanine + CO2. It participates in cofactor biosynthesis; coenzyme A biosynthesis. In terms of biological role, catalyzes the decarboxylation of L-aspartate to produce beta-alanine. In Halobacterium salinarum (strain ATCC 29341 / DSM 671 / R1), this protein is Probable L-aspartate decarboxylase.